The sequence spans 604 residues: Serine protease 56 (604 aa).

A signal peptide spans 1-22 (MPLAMLLLLLLLLSPDSQTAHG). The segment at 70 to 94 (CQGPGRPRPQAPLLQDPPEPVQCGE) is disordered. Positions 75-89 (RPRPQAPLLQDPPEP) are enriched in pro residues. N-linked (GlcNAc...) asparagine glycosylation is present at Asn-101. In terms of domain architecture, Peptidase S1 spans 109-341 (IVGGSTAPSG…FKDWLQEQMS (233 aa)). A disulfide bridge connects residues Cys-134 and Cys-150. Residues His-149 and Asp-195 each act as charge relay system in the active site. 3 disulfide bridges follow: Cys-229-Cys-296, Cys-260-Cys-275, and Cys-286-Cys-317. The active-site Charge relay system is Ser-290. Disordered regions lie at residues 424-452 (RPGLRRGVSAPARSAPSLQELPGHNPREQ) and 578-604 (PQAPWIGADQGQRLGKERQGQLQPPVP).

This sequence belongs to the peptidase S1 family. Expressed in the eye: present in the retina and in the optic nerve.

It is found in the endoplasmic reticulum membrane. Functionally, serine protease required during eye development. The protein is Serine protease 56 (Prss56) of Mus musculus (Mouse).